Consider the following 299-residue polypeptide: Probable lipid kinase YegS (299 aa).

The DAGKc domain maps to 2–133 (ANFPASLLIL…IDMARVNDKT (132 aa)). ATP-binding positions include Thr40, 66–72 (GDGTINE), and Thr95. Residues Leu215, Asp218, and Leu220 each coordinate Mg(2+). Glu271 (proton acceptor) is an active-site residue.

The protein belongs to the diacylglycerol/lipid kinase family. YegS lipid kinase subfamily. It depends on Mg(2+) as a cofactor. Ca(2+) serves as cofactor.

It localises to the cytoplasm. Its function is as follows. Probably phosphorylates lipids; the in vivo substrate is unknown. This Salmonella heidelberg (strain SL476) protein is Probable lipid kinase YegS.